Reading from the N-terminus, the 400-residue chain is Queuine tRNA-ribosyltransferase catalytic subunit (400 aa).

D89 acts as the Proton acceptor in catalysis. Residues 89–93 (DSGGF), D143, Q185, and G212 each bind substrate. Residues 243–249 (GVGFPVD) are RNA binding. Residue D262 is the Nucleophile of the active site. The segment at 267–271 (TRTAR) is RNA binding; important for wobble base 34 recognition. The Zn(2+) site is built by C301, C303, C306, and H331.

It belongs to the queuine tRNA-ribosyltransferase family. In terms of assembly, heterodimer of a catalytic subunit and an accessory subunit. The cofactor is Zn(2+).

The protein resides in the cytoplasm. It carries out the reaction guanosine(34) in tRNA + queuine = queuosine(34) in tRNA + guanine. Its function is as follows. Catalytic subunit of the queuine tRNA-ribosyltransferase (TGT) that catalyzes the base-exchange of a guanine (G) residue with queuine (Q) at position 34 (anticodon wobble position) in tRNAs with GU(N) anticodons (tRNA-Asp, -Asn, -His and -Tyr), resulting in the hypermodified nucleoside queuosine (7-(((4,5-cis-dihydroxy-2-cyclopenten-1-yl)amino)methyl)-7-deazaguanosine). Catalysis occurs through a double-displacement mechanism. The nucleophile active site attacks the C1' of nucleotide 34 to detach the guanine base from the RNA, forming a covalent enzyme-RNA intermediate. The proton acceptor active site deprotonates the incoming queuine, allowing a nucleophilic attack on the C1' of the ribose to form the product. The protein is Queuine tRNA-ribosyltransferase catalytic subunit of Caenorhabditis briggsae.